The following is a 207-amino-acid chain: Probable RNA 2'-phosphotransferase (207 aa).

The protein belongs to the KptA/TPT1 family.

Functionally, removes the 2'-phosphate from RNA via an intermediate in which the phosphate is ADP-ribosylated by NAD followed by a presumed transesterification to release the RNA and generate ADP-ribose 1''-2''-cyclic phosphate (APPR&gt;P). May function as an ADP-ribosylase. The sequence is that of Probable RNA 2'-phosphotransferase from Methanosarcina barkeri (strain Fusaro / DSM 804).